The sequence spans 278 residues: Orotidine 5'-phosphate decarboxylase (278 aa).

Residue lysine 95 is the Proton donor of the active site.

Belongs to the OMP decarboxylase family. Type 2 subfamily.

The catalysed reaction is orotidine 5'-phosphate + H(+) = UMP + CO2. It functions in the pathway pyrimidine metabolism; UMP biosynthesis via de novo pathway; UMP from orotate: step 2/2. In Mycobacterium marinum (strain ATCC BAA-535 / M), this protein is Orotidine 5'-phosphate decarboxylase.